Consider the following 149-residue polypeptide: Heat shock protein beta-3 (149 aa).

One can recognise a sHSP domain in the interval 47-149 (KARAAQAPPV…VEVKDSAGTK (103 aa)).

It belongs to the small heat shock protein (HSP20) family.

The protein localises to the cytoplasm. Its subcellular location is the nucleus. Its function is as follows. Inhibitor of actin polymerization. This is Heat shock protein beta-3 (HSPB3) from Bos taurus (Bovine).